An 846-amino-acid chain; its full sequence is Sucrose synthase 6 (846 aa).

The GT-B glycosyltransferase stretch occupies residues 276–755 (CVFTVVIFSI…GLQRIYECYT (480 aa)).

The protein belongs to the glycosyltransferase 1 family. Plant sucrose synthase subfamily.

It catalyses the reaction an NDP-alpha-D-glucose + D-fructose = a ribonucleoside 5'-diphosphate + sucrose + H(+). Functionally, sucrose-cleaving enzyme that provides UDP-glucose and fructose for various metabolic pathways. The protein is Sucrose synthase 6 (SUS6) of Oryza sativa subsp. japonica (Rice).